The chain runs to 163 residues: CASP-like protein 1C2 (163 aa).

Residues 1–6 (MAKSNK) lie on the Cytoplasmic side of the membrane. The chain crosses the membrane as a helical span at residues 7–27 (IFTNTLRLLALAATVVAIVFM). The Extracellular segment spans residues 28–52 (VTSHDSAQVLNLTFTAKYSNTPAFK). An N-linked (GlcNAc...) asparagine glycan is attached at Asn38. The chain crosses the membrane as a helical span at residues 53 to 73 (FLVIGEAIAGGYTVISILLSF). Residues 74-79 (KGLFWR) are Cytoplasmic-facing. Residues 80–100 (LIVILDMVTTVLLTSSISAAL) traverse the membrane as a helical segment. The Extracellular segment spans residues 101–128 (AIAQVGKKGNTHAGWLPICGQVPDFCDY). Residues 129–149 (VTIALIAGFAAAIIYFVLLLC) traverse the membrane as a helical segment. The Cytoplasmic segment spans residues 150–163 (SLYVVLSPIFVATP).

Belongs to the Casparian strip membrane proteins (CASP) family. As to quaternary structure, homodimer and heterodimers.

The protein resides in the cell membrane. This chain is CASP-like protein 1C2, found in Populus trichocarpa (Western balsam poplar).